The following is a 689-amino-acid chain: Transcription factor MYC2 (689 aa).

The JAZ-interaction domain stretch occupies residues 94–172 (LQQRLQALID…VLRELNSLIS (79 aa)). Over residues 316-349 (NTVQTNSVPSSNSNKQIAYGNENNHPSGNGQSCY) the composition is skewed to polar residues. 2 disordered regions span residues 316–361 (NTVQ…PQQQ) and 420–519 (QSQF…EAER). A compositionally biased stretch (low complexity) spans 350–361 (NQQQQKNPPQQQ). Residues 471 to 495 (DSEHSDLEASVVKEADSSRVVEPEK) are compositionally biased toward basic and acidic residues. The span at 496–505 (RPRKRGRKPA) shows a compositional bias: basic residues. Residues 506–519 (NGREEPLNHVEAER) are compositionally biased toward basic and acidic residues. The tract at residues 509–522 (EEPLNHVEAERQRR) is basic motif; degenerate. The bHLH domain occupies 509 to 558 (EEPLNHVEAERQRREKLNQRFYALRAVVPNVSKMDKASLLGDAISYINEL). A helix-loop-helix motif region spans residues 523 to 558 (EKLNQRFYALRAVVPNVSKMDKASLLGDAISYINEL). Residues 563-602 (QNTESDKEDLKSQIEDLKKESRRPGPPPPPNQDLKMSSHT) are disordered. The span at 566–585 (ESDKEDLKSQIEDLKKESRR) shows a compositional bias: basic and acidic residues.

In terms of assembly, interacts (via N-terminus) with MED25. Interacts (via N-terminus) with JAZ7. MED25 and JAZ7 compete with each other to bind to MYC2. Interacts (via N-terminus) with MTB1. MTB1 and MED25 compete with each other to bind to MYC2. Expressed at low levels in roots, stems, leaves, flowers and fruits.

Its subcellular location is the nucleus. In terms of biological role, transcriptional activator that binds to the G-box motif (5'-AACGTG-3') found in the promoter of the jasmonate-induced gene LAPA1. Acts as a negative regulator of blue light-mediated photomorphogenesis and positively regulates root growth. Promotes growth in response to the phytohormones abscisic acid (ABA) and jasmonate (JA). Binds to the G-box motif (5'-CACGTG-3') of the RBCS-3A gene promoter. Acts downstream of the jasmonate (JA) receptor to orchestrate JA-mediated activation of plant responses. Positively regulates both wound-responsive and pathogen-responsive genes through MYC2-targeted transcription factors (MTFs) involved in early response to JA. With JA2L forms a transcription module that regulates wounding-responsive genes. With ERF.C3 forms a transcription module that regulates pathogen-responsive genes. Plays a critical role in orchestrating JA-mediated defense gene expression during Botrytis cinerea infection. Negatively regulates defense responses to root-knot nematodes, potentially by mediating crosstalk among the hormones strigolactones, abscisic acid (ABA) and jasmonate (JA). Regulates the termination of JA-mediated defense responses by specifically binding the G-box (5'-CACATG-3') motifs in the promoters of MTB1, MTB2 and MTB3, which are transcription factors that negatively regulates JA signaling. May be involved in JA-induced chilling tolerance, possibly by ameliorating the antioxidant enzyme system of fruit and increasing proline and lycopene levels. In Solanum lycopersicum (Tomato), this protein is Transcription factor MYC2.